The sequence spans 30 residues: Photosystem I reaction center subunit XII (30 aa).

Residues 7-27 traverse the membrane as a helical segment; the sequence is VFIGLVIALVPAILAFKLGLS.

The protein belongs to the PsaM family.

It is found in the plastid. The protein localises to the chloroplast thylakoid membrane. The protein is Photosystem I reaction center subunit XII of Cyanidium caldarium (Red alga).